The chain runs to 105 residues: Large ribosomal subunit protein uL23 (105 aa).

The protein belongs to the universal ribosomal protein uL23 family. In terms of assembly, part of the 50S ribosomal subunit. Contacts protein L29, and trigger factor when it is bound to the ribosome.

Its function is as follows. One of the early assembly proteins it binds 23S rRNA. One of the proteins that surrounds the polypeptide exit tunnel on the outside of the ribosome. Forms the main docking site for trigger factor binding to the ribosome. The polypeptide is Large ribosomal subunit protein uL23 (Janthinobacterium sp. (strain Marseille) (Minibacterium massiliensis)).